A 382-amino-acid chain; its full sequence is Alkanesulfonate monooxygenase (382 aa).

The protein belongs to the SsuD family. As to quaternary structure, homotetramer.

The catalysed reaction is an alkanesulfonate + FMNH2 + O2 = an aldehyde + FMN + sulfite + H2O + 2 H(+). Catalyzes the desulfonation of aliphatic sulfonates. This Yersinia pseudotuberculosis serotype IB (strain PB1/+) protein is Alkanesulfonate monooxygenase.